A 545-amino-acid chain; its full sequence is Chaperonin GroEL 1 (545 aa).

ATP contacts are provided by residues 30–33 (TLGP), Lys-51, 87–91 (DGTTT), Gly-415, and Asp-495.

It belongs to the chaperonin (HSP60) family. As to quaternary structure, forms a cylinder of 14 subunits composed of two heptameric rings stacked back-to-back. Interacts with the co-chaperonin GroES.

The protein localises to the cytoplasm. The enzyme catalyses ATP + H2O + a folded polypeptide = ADP + phosphate + an unfolded polypeptide.. In terms of biological role, together with its co-chaperonin GroES, plays an essential role in assisting protein folding. The GroEL-GroES system forms a nano-cage that allows encapsulation of the non-native substrate proteins and provides a physical environment optimized to promote and accelerate protein folding. The sequence is that of Chaperonin GroEL 1 from Rhizobium meliloti (strain 1021) (Ensifer meliloti).